The primary structure comprises 466 residues: Carboxy-terminal processing protease CtpA (466 aa).

The signal sequence occupies residues 1 to 36; it reads MKRQLKLFFIVLITAVVASALTLFITGNSSILGQKS. Positions 96-174 constitute a PDZ domain; the sequence is DETISASFEG…TKVKLELNRA (79 aa). Active-site charge relay system residues include serine 297, glutamate 308, and lysine 322.

It belongs to the peptidase S41A family.

The catalysed reaction is The enzyme shows specific recognition of a C-terminal tripeptide, Xaa-Yaa-Zaa, in which Xaa is preferably Ala or Leu, Yaa is preferably Ala or Tyr, and Zaa is preferably Ala, but then cleaves at a variable distance from the C-terminus. A typical cleavage is -Ala-Ala-|-Arg-Ala-Ala-Lys-Glu-Asn-Tyr-Ala-Leu-Ala-Ala.. In Bacillus subtilis (strain 168), this protein is Carboxy-terminal processing protease CtpA (ctpA).